Consider the following 409-residue polypeptide: Threonine dehydratase-like protein AKTS1-1 (409 aa).

A disordered region spans residues 1–21 (MADYLRQVMPENDSDSEALPR). N6-(pyridoxal phosphate)lysine is present on Lys-111. Residues Asn-138, 239–243 (GEGSL), and Ser-368 contribute to the pyridoxal 5'-phosphate site.

The protein belongs to the serine/threonine dehydratase family. Pyridoxal 5'-phosphate is required as a cofactor.

Its pathway is mycotoxin biosynthesis. Functionally, threonine dehydratase-like protein; part of the gene clusters that mediate the biosynthesis of the host-selective toxins (HSTs) AK-toxins responsible for Japanese pear black spot disease by the Japanese pear pathotype. AK-toxins are esters of 9,10-epoxy 8-hydroxy 9-methyldecatrienoic acid (EDA). On cellular level, AK-toxins affect plasma membrane of susceptible cells and cause a sudden increase in loss of K(+) after a few minutes of toxin treatment. The acyl-CoA ligase AKT1, the hydrolase AKT2 and enoyl-CoA hydratase AKT3 are all involved in the biosynthesis of the AK-, AF- and ACT-toxin common 9,10-epoxy-8-hydroxy-9-methyl-decatrienoic acid (EDA) structural moiety. Part of the EDA biosynthesis occurs in the peroxisome since these 3 enzymes are localized in peroxisomes. The exact roles of the 3 enzymes, as well as of additional AK-toxin clusters enzymes, including AKT4, AKT6 and AKTS1, have still to be elucidated. The Cytochrome P450 monooxygenase AKT7 on the other side functions to limit production of EDA and AK-toxin, probably via the catalysis of a side reaction of EDA or its precursor. The sequence is that of Threonine dehydratase-like protein AKTS1-1 from Alternaria alternata (Alternaria rot fungus).